Reading from the N-terminus, the 292-residue chain is MATPNGPRVPCPQAAVARALLFGLVLIQGAGVAGTTDVVVAYNITWKSTNFKTILEWEPKPINHVYTVQISPRLGNWKNKCFYTTNTECDVTDEIVKNVRETYLARVLSYPADTSSSTVEPPFTNSPEFTPYLETNLGQPTIQSFEQVGTKLNVTVQDARTLVRANSAFLSLRDVFGKDLNYTLYYWKASSTGKKKATTNTNGFLIDVDKGENYCFHVQAVILSRRVNQKSPESPIKCTSHEKVLSTELFFIIGTVMLVIIIFIVVLSVSLHKCRKVRAERSGKENTPLNAA.

The N-terminal stretch at M1–T35 is a signal peptide. The Extracellular portion of the chain corresponds to T36–E248. N-linked (GlcNAc...) asparagine glycosylation is present at N43. A WKS motif motif is present at residues W46–S48. A disulfide bridge connects residues C81 and C89. N153 and N181 each carry an N-linked (GlcNAc...) asparagine glycan. A disulfide bridge links C215 with C238. The helical transmembrane segment at L249–L271 threads the bilayer. The Cytoplasmic segment spans residues H272–A292. C274 carries S-palmitoyl cysteine lipidation.

This sequence belongs to the tissue factor family. Interacts with HSPE; the interaction, inhibited by heparin, promotes the generation of activated factor X and activates coagulation in the presence of activated factor VII.

The protein localises to the membrane. Initiates blood coagulation by forming a complex with circulating factor VII or VIIa. The [TF:VIIa] complex activates factors IX or X by specific limited proteolysis. TF plays a role in normal hemostasis by initiating the cell-surface assembly and propagation of the coagulation protease cascade. The chain is Tissue factor (F3) from Bos taurus (Bovine).